The primary structure comprises 331 residues: Protein RecA (331 aa).

Residue 61-68 coordinates ATP; the sequence is GPESSGKT.

This sequence belongs to the RecA family.

It is found in the cytoplasm. Can catalyze the hydrolysis of ATP in the presence of single-stranded DNA, the ATP-dependent uptake of single-stranded DNA by duplex DNA, and the ATP-dependent hybridization of homologous single-stranded DNAs. It interacts with LexA causing its activation and leading to its autocatalytic cleavage. This Mycoplasma mobile (strain ATCC 43663 / 163K / NCTC 11711) (Mesomycoplasma mobile) protein is Protein RecA.